We begin with the raw amino-acid sequence, 369 residues long: MHGESPIKRRESRKIWVGSVPVGGDAPIAVQSMTNSDTNDVAATVAQINRLEAAGVDIVRVSVPDMDAAEAFGRIKQLVKVPLVADIHFDHRIALRVAELGVDCLRINPGNIGREDRVRAVVDAARDRGIPIRIGVNAGSLEKDLQKKYGEPTPEALVESALRHVEHLQRLNFQDFKVSVKASDVFMAVAAYRLLAKEIVQPLHLGITEAGGLRSGTVKSAVGLGMLLAEGIGDTIRISLAADPVEEVKVGYDILKSLRLRSRGINFIACPSCSRQNFDVVKTMNELEGRLEDLLVPLDVAVIGCVVNGPGEAKEAHIGLTGGTPNLIYIDGKPAQKLTNDNLVNELERLIREKAAEKAEADASVIVRG.

4 residues coordinate [4Fe-4S] cluster: cysteine 270, cysteine 273, cysteine 305, and glutamate 312.

It belongs to the IspG family. It depends on [4Fe-4S] cluster as a cofactor.

The catalysed reaction is (2E)-4-hydroxy-3-methylbut-2-enyl diphosphate + oxidized [flavodoxin] + H2O + 2 H(+) = 2-C-methyl-D-erythritol 2,4-cyclic diphosphate + reduced [flavodoxin]. It functions in the pathway isoprenoid biosynthesis; isopentenyl diphosphate biosynthesis via DXP pathway; isopentenyl diphosphate from 1-deoxy-D-xylulose 5-phosphate: step 5/6. Functionally, converts 2C-methyl-D-erythritol 2,4-cyclodiphosphate (ME-2,4cPP) into 1-hydroxy-2-methyl-2-(E)-butenyl 4-diphosphate. The protein is 4-hydroxy-3-methylbut-2-en-1-yl diphosphate synthase (flavodoxin) of Pseudomonas syringae pv. syringae (strain B728a).